Consider the following 506-residue polypeptide: Galactose/methyl galactoside import ATP-binding protein MglA (506 aa).

2 ABC transporter domains span residues 14–249 (LEMR…VGRS) and 259–506 (NKPG…SLHL). 46–53 (GENGAGKS) contacts ATP.

This sequence belongs to the ABC transporter superfamily. Galactose/methyl galactoside importer (TC 3.A.1.2.3) family. As to quaternary structure, the complex is composed of one ATP-binding protein (MglA), two transmembrane proteins (MglC) and a solute-binding protein (MglB).

It localises to the cell inner membrane. The catalysed reaction is D-galactose(out) + ATP + H2O = D-galactose(in) + ADP + phosphate + H(+). The enzyme catalyses methyl beta-D-galactoside(out) + ATP + H2O = methyl beta-D-galactoside(in) + ADP + phosphate + H(+). With respect to regulation, stimulated 3-fold by galactose and inhibited by vanadate, N-ethylmaleimide, and 5-methoxyindole-2-carboxylic acid. Part of the ABC transporter complex MglABC involved in galactose/methyl galactoside import. Responsible for energy coupling to the transport system. This Salmonella typhimurium (strain LT2 / SGSC1412 / ATCC 700720) protein is Galactose/methyl galactoside import ATP-binding protein MglA.